The chain runs to 842 residues: GVEDLILLEPLDEESLIKNLQLRYEKKEIYTYIGNVVISMNPYQQLPIYGPEFIAKYRDYTFYELKPHIYALANVAYQSLKDRDRDQCILITGESGAGKTEASKLVMSYVAAVCGKGEQVNSVKEQLLQSNPVLEAFGNAKTIRNDNSSRFGKYMDIEFDFKGSPLGGVITNYLLEKSRVVKQLKGERNFHIFYQLLAGADTQLLKALKLEEDARGYAYLNGEVSRVNGMDDASNFRAVQNAMAVIGFSEEEIRQVLEVTALVLKLGNVKLAGEFQANGLPASGVCDGKGIQEIGEMMGLNSVELEKALSSRTMETGKEKVVTVLNVIQAQYARDALAKNIYSRLFDWIVNRINESIKVGTGEKRKVMGVLDIYGFEILEDNSFEQFVINYCNEKLQQVFIELTLKEEQEEYKREGIPWTKVEYFDNGIICDLIEHSQRGILAMLDEECLRPGVVSDTTFLAKLNQLFSKHSHYESKVTQNAQRQYDRTMGLSCFRICHYAGKVTYDVTSFIDKNNDLLFRDLSQTMWKAQHPLLHSLFPRGNPKEASPKRPPTAGTQFKNSVAILMKNLYSKNPNYIRCIKPNDQQQQGRFTSELVMVQARYLGLLENVRVRRAGYAFRQAYKPFLERYRLLSRSTWPRWNGEDREGVEKVLGSLILSSEELAYGRTKIFIRSPKTLFYLEEQRRLRLQQLATLIQKVYRGWRCRTHYQQMRKSQILLSAWFRGNKQKKHYGKIRSSVLLIQAFVRGWKARKNYRKYFRSGARITLANFIYQSITQKFLLNLKKNLPSTKVLDNTWPAAPYRCFNTANQELQHLFYQWKCKKYRDQLSPKQVQTLREKLCA.

The Myosin motor domain occupies 1–686 (GVEDLILLEP…TLFYLEEQRR (686 aa)). 93 to 100 (GESGAGKT) contributes to the ATP binding site. Residues 563 to 585 (VAILMKNLYSKNPNYIRCIKPND) are actin-binding. IQ domains follow at residues 689 to 712 (LQQL…YQQM), 713 to 733 (RKSQ…KHYG), and 735 to 764 (IRSS…SGAR).

The protein belongs to the TRAFAC class myosin-kinesin ATPase superfamily. Myosin family. In terms of processing, phosphorylated by ALPK1.

Functionally, involved in directing the movement of organelles along actin filaments. This Rattus norvegicus (Rat) protein is Unconventional myosin-Ia (Myo1a).